A 156-amino-acid polypeptide reads, in one-letter code: Small ribosomal subunit protein uS7 (156 aa).

This sequence belongs to the universal ribosomal protein uS7 family. As to quaternary structure, part of the 30S ribosomal subunit. Contacts proteins S9 and S11.

In terms of biological role, one of the primary rRNA binding proteins, it binds directly to 16S rRNA where it nucleates assembly of the head domain of the 30S subunit. Is located at the subunit interface close to the decoding center, probably blocks exit of the E-site tRNA. This chain is Small ribosomal subunit protein uS7, found in Aster yellows witches'-broom phytoplasma (strain AYWB).